Consider the following 223-residue polypeptide: Glutelin-2 (223 aa).

Positions 1-19 (MRVLLVALALLALAASATS) are cleaved as a signal peptide. 10 consecutive repeat copies span residues 31–36 (PPPVHL), 37–42 (PPPVHL), 43–48 (PPPVHL), 49–54 (PPPVHL), 55–60 (PPPVHL), 61–66 (PPPVHL), 67–72 (PPPVHV), 73–78 (PPPVHL), 97–104 (QPHPCPCQ), and 105–112 (QPHPSPCQ). Residues 31-78 (PPPVHLPPPVHLPPPVHLPPPVHLPPPVHLPPPVHLPPPVHVPPPVHL) form an 8 X 6 AA tandem repeats of P-P-P-V-H-L region. The segment at 97–112 (QPHPCPCQQPHPSPCQ) is 2 X 8 AA tandem repeats of Q-P-H-P-C-P-C-Q.

Belongs to the gliadin/glutenin family.

Its subcellular location is the vacuole. The protein localises to the aleurone grain membrane. Seed storage protein. It accounts for about 15% of the total endosperm protein content. The chain is Glutelin-2 from Zea mays (Maize).